A 258-amino-acid polypeptide reads, in one-letter code: UPF0246 protein YaaA (258 aa).

Belongs to the UPF0246 family.

This chain is UPF0246 protein YaaA, found in Escherichia coli (strain 55989 / EAEC).